A 221-amino-acid chain; its full sequence is MAIQLRVFYLVPLLLASYVQTTPRLEKMKMDCYKDVKGTIYNYEALSLNGKERIPFKQYAGKHVLFVNVATYCGLTIQYPELNALQDDLKQFGLVILGFPCNQFGKQEPGDNTEILPGLKYVRPGKGFLPNFQLFAKGDVNGEKEQEIFTFLKRSCPHPSETVVTSKHTFWEPIKVHDIRWNFEKFLVGPNGVPVMRWFHQAPVSTVKSDILAYLNQFKTI.

The N-terminal stretch at 1–21 (MAIQLRVFYLVPLLLASYVQT) is a signal peptide. The active site involves Cys73.

Belongs to the glutathione peroxidase family. As to expression, epididymis.

The protein localises to the secreted. It catalyses the reaction 2 glutathione + H2O2 = glutathione disulfide + 2 H2O. Functionally, protects cells and enzymes from oxidative damage, by catalyzing the reduction of hydrogen peroxide, lipid peroxides and organic hydroperoxide, by glutathione. May constitute a glutathione peroxidase-like protective system against peroxide damage in sperm membrane lipids. This is Epididymal secretory glutathione peroxidase (Gpx5) from Rattus norvegicus (Rat).